The primary structure comprises 64 residues: uncharacterized protein (64 aa).

The protein localises to the mitochondrion. This is an uncharacterized protein from Marchantia polymorpha (Common liverwort).